Reading from the N-terminus, the 349-residue chain is tRNA pseudouridine synthase D (349 aa).

Phe27 lines the substrate pocket. The active-site Nucleophile is the Asp80. A substrate-binding site is contributed by Asn129. Residues 155–303 form the TRUD domain; it reads GVPNYFGAQR…VEAARRAMLL (149 aa). Phe329 serves as a coordination point for substrate.

This sequence belongs to the pseudouridine synthase TruD family.

It catalyses the reaction uridine(13) in tRNA = pseudouridine(13) in tRNA. Functionally, responsible for synthesis of pseudouridine from uracil-13 in transfer RNAs. The sequence is that of tRNA pseudouridine synthase D from Escherichia coli O6:H1 (strain CFT073 / ATCC 700928 / UPEC).